Here is a 154-residue protein sequence, read N- to C-terminus: Protein disulfide-isomerase LQY1, chloroplastic (154 aa).

The N-terminal 43 residues, 1-43 (MPVSAPSPPRLHSPFIHCPINFTPSSFSARNLRSPSTSYPRIK), are a transit peptide targeting the chloroplast. The chain crosses the membrane as a helical span at residues 51 to 71 (VVAISVGVASVALGIGIPVFY). The CR-type zinc-finger motif lies at 77–147 (NAAKRENTQP…SGVQPRYLDR (71 aa)). Residues cysteine 87, cysteine 90, cysteine 98, cysteine 101, cysteine 121, cysteine 124, cysteine 132, and cysteine 135 each coordinate Zn(2+).

This sequence belongs to the BSD2 chaperone family. In terms of assembly, interacts with the photosystem II core subunits. Interacts with HHL1. Zn(2+) serves as cofactor.

It is found in the plastid. The protein localises to the chloroplast thylakoid membrane. The enzyme catalyses Catalyzes the rearrangement of -S-S- bonds in proteins.. Its function is as follows. Protein disulfide-isomerase probably involved upon formation of a complex with HHL1 in maintaining photosystem II (PSII) activity under high light by regulating repair and reassembly of PSII complexes. In Arabidopsis thaliana (Mouse-ear cress), this protein is Protein disulfide-isomerase LQY1, chloroplastic.